The chain runs to 162 residues: UPF0305 protein MmarC6_0221 (162 aa).

This sequence belongs to the UPF0305 family.

The chain is UPF0305 protein MmarC6_0221 from Methanococcus maripaludis (strain C6 / ATCC BAA-1332).